We begin with the raw amino-acid sequence, 131 residues long: CLAVATA3/ESR (CLE)-related protein ESR1 (131 aa).

The signal sequence occupies residues 1-26 (MASRMGMVAIVSLFVCALAASTSVNA). The interval 49-131 (RQQQQGGFIG…IGPPPLSDRY (83 aa)) is disordered. Hydroxyproline occurs at positions 81 and 84. O-linked (Ara...) hydroxyproline glycosylation is present at Pro84.

This sequence belongs to the CLV3/ESR signal peptide family. Post-translationally, the O-glycosylation (arabinosylation) of the hydroxyproline Pro-84 enhances binding affinity of the ESR1p peptide for its receptor. In terms of tissue distribution, seed endosperm.

Its subcellular location is the secreted. The protein resides in the extracellular space. Extracellular signal peptide that regulates cell fate. The polypeptide is CLAVATA3/ESR (CLE)-related protein ESR1 (Zea mays (Maize)).